A 521-amino-acid chain; its full sequence is Anthranilate synthase component 1 (521 aa).

L-tryptophan contacts are provided by residues threonine 40 and 292–294 (PYM). Chorismate is bound at residue 329-330 (GT). Glutamate 362 lines the Mg(2+) pocket. Residues tyrosine 450, arginine 470, 484–486 (GAG), and glycine 486 contribute to the chorismate site. Glutamate 499 provides a ligand contact to Mg(2+).

This sequence belongs to the anthranilate synthase component I family. Heterotetramer consisting of two non-identical subunits: a beta subunit (TrpG) and a large alpha subunit (TrpE). Mg(2+) is required as a cofactor.

The catalysed reaction is chorismate + L-glutamine = anthranilate + pyruvate + L-glutamate + H(+). It participates in amino-acid biosynthesis; L-tryptophan biosynthesis; L-tryptophan from chorismate: step 1/5. Feedback inhibited by tryptophan. Part of a heterotetrameric complex that catalyzes the two-step biosynthesis of anthranilate, an intermediate in the biosynthesis of L-tryptophan. In the first step, the glutamine-binding beta subunit (TrpG) of anthranilate synthase (AS) provides the glutamine amidotransferase activity which generates ammonia as a substrate that, along with chorismate, is used in the second step, catalyzed by the large alpha subunit of AS (TrpE) to produce anthranilate. In the absence of TrpG, TrpE can synthesize anthranilate directly from chorismate and high concentrations of ammonia. The polypeptide is Anthranilate synthase component 1 (trpE) (Buchnera aphidicola subsp. Acyrthosiphon pisum (strain APS) (Acyrthosiphon pisum symbiotic bacterium)).